The primary structure comprises 186 residues: Dihydrofolate reductase (186 aa).

In terms of domain architecture, DHFR spans 3 to 183 (KFSLIVAVCA…IQYQYRIYEK (181 aa)). NADP(+)-binding positions include A9 and 15-21 (GIGIKGD). Substrate is bound at residue 29–34 (ELKYFS). 53-55 (RKT) lines the NADP(+) pocket. R69 is a substrate binding site. NADP(+) contacts are provided by residues 75-77 (TRD) and 116-123 (GGNAVYKE).

The protein belongs to the dihydrofolate reductase family.

It carries out the reaction (6S)-5,6,7,8-tetrahydrofolate + NADP(+) = 7,8-dihydrofolate + NADPH + H(+). It participates in cofactor biosynthesis; tetrahydrofolate biosynthesis; 5,6,7,8-tetrahydrofolate from 7,8-dihydrofolate: step 1/1. In terms of biological role, key enzyme in folate metabolism. Catalyzes an essential reaction for de novo glycine and purine synthesis, and for DNA precursor synthesis. The polypeptide is Dihydrofolate reductase (DHFR) (Aedes albopictus (Asian tiger mosquito)).